A 484-amino-acid polypeptide reads, in one-letter code: Aspartyl/glutamyl-tRNA(Asn/Gln) amidotransferase subunit B (484 aa).

Belongs to the GatB/GatE family. GatB subfamily. In terms of assembly, heterotrimer of A, B and C subunits.

It catalyses the reaction L-glutamyl-tRNA(Gln) + L-glutamine + ATP + H2O = L-glutaminyl-tRNA(Gln) + L-glutamate + ADP + phosphate + H(+). The catalysed reaction is L-aspartyl-tRNA(Asn) + L-glutamine + ATP + H2O = L-asparaginyl-tRNA(Asn) + L-glutamate + ADP + phosphate + 2 H(+). Its function is as follows. Allows the formation of correctly charged Asn-tRNA(Asn) or Gln-tRNA(Gln) through the transamidation of misacylated Asp-tRNA(Asn) or Glu-tRNA(Gln) in organisms which lack either or both of asparaginyl-tRNA or glutaminyl-tRNA synthetases. The reaction takes place in the presence of glutamine and ATP through an activated phospho-Asp-tRNA(Asn) or phospho-Glu-tRNA(Gln). The chain is Aspartyl/glutamyl-tRNA(Asn/Gln) amidotransferase subunit B from Anaeromyxobacter sp. (strain K).